A 462-amino-acid polypeptide reads, in one-letter code: Hyaluronidase-1 (462 aa).

The signal sequence occupies residues 1–52 (MLGLTQHAQKVWRMKPFSPEVSPGSSPATAGHLLRISTLFLTLLELAQVCRG). 2 disulfides stabilise this stretch: Cys-71/Cys-361 and Cys-235/Cys-249. N-linked (GlcNAc...) asparagine glycans are attached at residues Asn-98 and Asn-127. Glu-159 functions as the Proton donor in the catalytic mechanism. N-linked (GlcNAc...) asparagine glycans are attached at residues Asn-244, Asn-265, and Asn-378. Disulfide bonds link Cys-386/Cys-397, Cys-391/Cys-446, and Cys-448/Cys-457. The region spanning 446 to 457 (CRCYRGWRGKWC) is the EGF-like domain.

The protein belongs to the glycosyl hydrolase 56 family. As to expression, highly expressed in liver, kidney, lung and skin.

Its subcellular location is the secreted. The protein localises to the lysosome. It carries out the reaction Random hydrolysis of (1-&gt;4)-linkages between N-acetyl-beta-D-glucosamine and D-glucuronate residues in hyaluronate.. May have a role in promoting tumor progression. May block the TGFB1-enhanced cell growth. The polypeptide is Hyaluronidase-1 (Hyal1) (Mus musculus (Mouse)).